A 644-amino-acid polypeptide reads, in one-letter code: Macrolide export ATP-binding/permease protein MacB (644 aa).

The ABC transporter domain maps to 4–242 (IECKNINRYF…SNVGRIREKA (239 aa)). 40-47 (GQSGSGKS) contacts ATP. Transmembrane regions (helical) follow at residues 270–290 (LLTM…VALG), 524–544 (IALI…LVSV), 574–594 (LICV…SLVF), and 607–627 (AMSV…FGFM).

The protein belongs to the ABC transporter superfamily. Macrolide exporter (TC 3.A.1.122) family. Homodimer.

It is found in the cell inner membrane. Non-canonical ABC transporter that contains transmembrane domains (TMD), which form a pore in the inner membrane, and an ATP-binding domain (NBD), which is responsible for energy generation. Confers resistance against macrolides. This chain is Macrolide export ATP-binding/permease protein MacB, found in Neisseria meningitidis serogroup B (strain ATCC BAA-335 / MC58).